The chain runs to 1015 residues: Putative helicase mov-10-B.2 (1015 aa).

Positions 94-130 are disordered; sequence QWFRPRRRQQNQANATPGNVSSVTPSSDQGPSCPESG. The span at 109–123 shows a compositional bias: polar residues; that stretch reads TPGNVSSVTPSSDQG. 555 to 562 provides a ligand contact to ATP; that stretch reads GPPGTGKT. The DEAG box motif lies at 677–680; sequence DEAG.

Belongs to the DNA2/NAM7 helicase family. SDE3 subfamily.

It localises to the cytoplasm. The protein localises to the P-body. The enzyme catalyses ATP + H2O = ADP + phosphate + H(+). Its function is as follows. Probable RNA helicase. Required for RNA-mediated gene silencing by the RNA-induced silencing complex (RISC). Required for both miRNA-mediated translational repression and miRNA-mediated cleavage of complementary mRNAs by RISC. This Danio rerio (Zebrafish) protein is Putative helicase mov-10-B.2 (mov10b.2).